A 320-amino-acid polypeptide reads, in one-letter code: Lipoyl synthase (320 aa).

Residues Cys-67, Cys-72, Cys-78, Cys-93, Cys-97, Cys-100, and Ser-307 each contribute to the [4Fe-4S] cluster site. A Radical SAM core domain is found at 79–296; sequence FNHGTATFMI…RDKANEMGFE (218 aa).

The protein belongs to the radical SAM superfamily. Lipoyl synthase family. [4Fe-4S] cluster is required as a cofactor.

The protein resides in the cytoplasm. It carries out the reaction [[Fe-S] cluster scaffold protein carrying a second [4Fe-4S](2+) cluster] + N(6)-octanoyl-L-lysyl-[protein] + 2 oxidized [2Fe-2S]-[ferredoxin] + 2 S-adenosyl-L-methionine + 4 H(+) = [[Fe-S] cluster scaffold protein] + N(6)-[(R)-dihydrolipoyl]-L-lysyl-[protein] + 4 Fe(3+) + 2 hydrogen sulfide + 2 5'-deoxyadenosine + 2 L-methionine + 2 reduced [2Fe-2S]-[ferredoxin]. The protein operates within protein modification; protein lipoylation via endogenous pathway; protein N(6)-(lipoyl)lysine from octanoyl-[acyl-carrier-protein]: step 2/2. Its function is as follows. Catalyzes the radical-mediated insertion of two sulfur atoms into the C-6 and C-8 positions of the octanoyl moiety bound to the lipoyl domains of lipoate-dependent enzymes, thereby converting the octanoylated domains into lipoylated derivatives. This chain is Lipoyl synthase, found in Haemophilus influenzae (strain 86-028NP).